Here is a 437-residue protein sequence, read N- to C-terminus: Asparagine--tRNA ligase (437 aa).

Belongs to the class-II aminoacyl-tRNA synthetase family. As to quaternary structure, homodimer.

It is found in the cytoplasm. It carries out the reaction tRNA(Asn) + L-asparagine + ATP = L-asparaginyl-tRNA(Asn) + AMP + diphosphate + H(+). The protein is Asparagine--tRNA ligase of Symbiobacterium thermophilum (strain DSM 24528 / JCM 14929 / IAM 14863 / T).